Here is a 202-residue protein sequence, read N- to C-terminus: Na(+)-translocating NADH-quinone reductase subunit E (202 aa).

The next 6 helical transmembrane spans lie at 11-31 (SIFL…FLAV), 39-59 (MGLG…NQLV), 79-99 (LSFL…QILE), 114-134 (GIFL…AFAV), 144-164 (IFYG…LAAV), and 180-200 (LGSV…FSGV).

It belongs to the NqrDE/RnfAE family. As to quaternary structure, composed of six subunits; NqrA, NqrB, NqrC, NqrD, NqrE and NqrF.

The protein localises to the cell inner membrane. The catalysed reaction is a ubiquinone + n Na(+)(in) + NADH + H(+) = a ubiquinol + n Na(+)(out) + NAD(+). Functionally, NQR complex catalyzes the reduction of ubiquinone-1 to ubiquinol by two successive reactions, coupled with the transport of Na(+) ions from the cytoplasm to the periplasm. NqrA to NqrE are probably involved in the second step, the conversion of ubisemiquinone to ubiquinol. The chain is Na(+)-translocating NADH-quinone reductase subunit E from Pseudoalteromonas atlantica (strain T6c / ATCC BAA-1087).